A 372-amino-acid chain; its full sequence is Citrate synthase 2 (372 aa).

Residue His257 is part of the active site. Phosphoserine is present on Ser284. The active site involves Asp308.

Belongs to the citrate synthase family. In terms of assembly, homodimer.

The catalysed reaction is oxaloacetate + acetyl-CoA + H2O = citrate + CoA + H(+). The protein operates within carbohydrate metabolism; tricarboxylic acid cycle; isocitrate from oxaloacetate: step 1/2. Functionally, might regulate the synthesis and function of enzymes involved in later enzymatic steps of Krebs cycle. Loss in activity results in sporulation defect. In Bacillus subtilis (strain 168), this protein is Citrate synthase 2 (citZ).